The primary structure comprises 53 residues: U13-myrmicitoxin-Tb1a (53 aa).

Positions 1-23 (MKLIYIFSLVAVIAVTMIPGIMG) are cleaved as a signal peptide. The propeptide occupies 24 to 29 (EAEAEG). At K52 the chain carries Lysine amide.

In terms of tissue distribution, expressed by the venom gland.

The protein localises to the secreted. In terms of biological role, in vivo, this neurotoxin paralyzes about 70% of blowflies (L.caesar) one hour after intrathoracic injection, when tested at high doses (45 nmol/g). This chain is U13-myrmicitoxin-Tb1a, found in Tetramorium bicarinatum (Tramp ant).